The sequence spans 503 residues: ATP synthase subunit alpha (503 aa).

ATP is bound at residue 170–177 (GDRATGKT).

The protein belongs to the ATPase alpha/beta chains family. As to quaternary structure, F-type ATPases have 2 components, CF(1) - the catalytic core - and CF(0) - the membrane proton channel. CF(1) has five subunits: alpha(3), beta(3), gamma(1), delta(1), epsilon(1). CF(0) has three main subunits: a(1), b(2) and c(9-12). The alpha and beta chains form an alternating ring which encloses part of the gamma chain. CF(1) is attached to CF(0) by a central stalk formed by the gamma and epsilon chains, while a peripheral stalk is formed by the delta and b chains.

The protein localises to the cell inner membrane. The catalysed reaction is ATP + H2O + 4 H(+)(in) = ADP + phosphate + 5 H(+)(out). Its function is as follows. Produces ATP from ADP in the presence of a proton gradient across the membrane. The alpha chain is a regulatory subunit. The sequence is that of ATP synthase subunit alpha from Aquifex aeolicus (strain VF5).